The following is a 139-amino-acid chain: Proline-rich protein 13 (139 aa).

A disordered region spans residues 1–139; the sequence is MWNPSAGPNP…SSSSSSSDSD (139 aa). Pro residues-rich tracts occupy residues 24–62 and 70–91; these read ACPP…PQPG and GPYP…PPAP. Residues 103-124 are compositionally biased toward basic residues; sequence KTRKKMKKAHKKSHKHHKHGKH. Over residues 125-139 the composition is skewed to low complexity; it reads SSSSSSSSSSSSDSD.

It localises to the nucleus. Functionally, negatively regulates TSP1 expression at the level of transcription. This down-regulation was shown to reduce taxane-induced apoptosis. In Rattus norvegicus (Rat), this protein is Proline-rich protein 13 (Prr13).